Here is a 358-residue protein sequence, read N- to C-terminus: MAKVAILGAGNVALTLAGDLARRLGQVSSIWAPISNRNSFNSVRSLGSLELVGPDYGGDFQPQLEDDLETAISGAAFIFLTVPTMGQQGILCELANFNLSSSVLVALPGSATSLACKQTLTPAFAPIAVIEATTSPYACRRVNAQVLMLSVKRTFEVASTQALSEEVRGGFEILFPNRLQWYQNPASIFFSNTNPVAHPAGILAAKDTIEQGISPIPKFYRKFVPQAITRVTAIDEERLTIVNALGLESETDFAYCKKWYGGHASNAREFYETFEGYADIETPRNMNHRYLSEDVKHILVLWVEIAEVIGVQVPEMKSVVQEASDVLNEDLSHTGRGLSSLNLEGSNANAIVRALNGV.

The protein belongs to the lysopine/nopaline/octopine/opine/vitopine dehydrogenases family. Monomer.

It carries out the reaction D-octopine + NAD(+) + H2O = L-arginine + pyruvate + NADH + H(+). It catalyses the reaction D-lysopine + NADP(+) + H2O = L-lysine + pyruvate + NADPH + H(+). Reductive condensation of pyruvate and arginine, lysine, histidine, or octopine to form octopine, lysopine, histopine, or octopinic acid, respectively. NADPH is the preferred cofactor, but NADH can also be used. The sequence is that of Protein ocs (ocs) from Agrobacterium tumefaciens (strain Ach5).